We begin with the raw amino-acid sequence, 312 residues long: Acetyl-coenzyme A carboxylase carboxyl transferase subunit beta (312 aa).

The CoA carboxyltransferase N-terminal domain maps to 24 to 293 (LWIKCPDSGQ…PHADEVAAPP (270 aa)). A disordered region spans residues 286 to 312 (ADEVAAPPPPDVEGPPPAAEPVALPPA). The segment covering 291–312 (APPPPDVEGPPPAAEPVALPPA) has biased composition (pro residues).

It belongs to the AccD/PCCB family. Acetyl-CoA carboxylase is a heterohexamer composed of biotin carboxyl carrier protein (AccB), biotin carboxylase (AccC) and two subunits each of ACCase subunit alpha (AccA) and ACCase subunit beta (AccD).

Its subcellular location is the cytoplasm. The enzyme catalyses N(6)-carboxybiotinyl-L-lysyl-[protein] + acetyl-CoA = N(6)-biotinyl-L-lysyl-[protein] + malonyl-CoA. It functions in the pathway lipid metabolism; malonyl-CoA biosynthesis; malonyl-CoA from acetyl-CoA: step 1/1. Functionally, component of the acetyl coenzyme A carboxylase (ACC) complex. Biotin carboxylase (BC) catalyzes the carboxylation of biotin on its carrier protein (BCCP) and then the CO(2) group is transferred by the transcarboxylase to acetyl-CoA to form malonyl-CoA. The chain is Acetyl-coenzyme A carboxylase carboxyl transferase subunit beta from Afipia carboxidovorans (strain ATCC 49405 / DSM 1227 / KCTC 32145 / OM5) (Oligotropha carboxidovorans).